We begin with the raw amino-acid sequence, 207 residues long: Cytochrome c biogenesis ATP-binding export protein CcmA (207 aa).

One can recognise an ABC transporter domain in the interval 2–204; it reads LECENLSCTR…TTIDIRNFNR (203 aa). 34 to 41 provides a ligand contact to ATP; it reads GPNGSGKT.

The protein belongs to the ABC transporter superfamily. CcmA exporter (TC 3.A.1.107) family. The complex is composed of two ATP-binding proteins (CcmA) and two transmembrane proteins (CcmB).

Its subcellular location is the cell membrane. The enzyme catalyses heme b(in) + ATP + H2O = heme b(out) + ADP + phosphate + H(+). Functionally, part of the ABC transporter complex CcmAB involved in the biogenesis of c-type cytochromes; once thought to export heme, this seems not to be the case, but its exact role is uncertain. Responsible for energy coupling to the transport system. This Wolbachia pipientis wMel protein is Cytochrome c biogenesis ATP-binding export protein CcmA.